A 114-amino-acid chain; its full sequence is Fumarate reductase subunit D (114 aa).

A run of 3 helical transmembrane segments spans residues 24-44, 50-70, and 92-112; these read VSAIFFPVVILIIGLLLPFGL, LITFAYSWIGKLVILVLTIFP, and GGFIFYGLATIYTVWVLFAVI.

This sequence belongs to the FrdD family. As to quaternary structure, part of an enzyme complex containing four subunits: a flavoprotein (FrdA), an iron-sulfur protein (FrdB), and two hydrophobic anchor proteins (FrdC and FrdD).

The protein resides in the cell inner membrane. Functionally, anchors the catalytic components of the fumarate reductase complex to the cell membrane, binds quinones. This Haemophilus influenzae (strain PittEE) protein is Fumarate reductase subunit D.